Reading from the N-terminus, the 143-residue chain is Acetyltransferase plu1384 (143 aa).

In terms of domain architecture, N-acetyltransferase spans 1 to 138 (MEIRVFRQDD…ESVIFSKRLI (138 aa)).

This sequence belongs to the acetyltransferase family. YpeA subfamily.

The protein is Acetyltransferase plu1384 of Photorhabdus laumondii subsp. laumondii (strain DSM 15139 / CIP 105565 / TT01) (Photorhabdus luminescens subsp. laumondii).